A 219-amino-acid chain; its full sequence is Protein Ac132 (219 aa).

The disordered stretch occupies residues 1-34; sequence MSDKTPTKKGGSHAMTLRERGVTKPPKKSEKLQQ. The segment covering 16 to 33 has biased composition (basic and acidic residues); it reads TLRERGVTKPPKKSEKLQ. Residues 103-134 form an NEBU-like domain region; sequence YPMAYFVNTDYKLKLECARIRSDLLYKNKNEV.

In terms of assembly, interacts with viral envelope protein E18 and the DNA-binding protein p6.9.

It localises to the host cytoplasm. The protein resides in the host nucleus. It is found in the virion. Plays an essential role in nucleocapsid entry in host nucleus. May act by binding and stabilizing F-actin in the infected cell, which might attach to nucleocapsids and then push the nucleocapsids into the nucleus. The chain is Protein Ac132 (Ac132) from Autographa californica nuclear polyhedrosis virus (AcMNPV).